A 286-amino-acid polypeptide reads, in one-letter code: UDP-3-O-acyl-N-acetylglucosamine deacetylase (286 aa).

The Zn(2+) site is built by His-79, His-237, and Asp-241. His-264 functions as the Proton donor in the catalytic mechanism.

It belongs to the LpxC family. It depends on Zn(2+) as a cofactor.

It catalyses the reaction a UDP-3-O-[(3R)-3-hydroxyacyl]-N-acetyl-alpha-D-glucosamine + H2O = a UDP-3-O-[(3R)-3-hydroxyacyl]-alpha-D-glucosamine + acetate. Its pathway is glycolipid biosynthesis; lipid IV(A) biosynthesis; lipid IV(A) from (3R)-3-hydroxytetradecanoyl-[acyl-carrier-protein] and UDP-N-acetyl-alpha-D-glucosamine: step 2/6. In terms of biological role, catalyzes the hydrolysis of UDP-3-O-myristoyl-N-acetylglucosamine to form UDP-3-O-myristoylglucosamine and acetate, the committed step in lipid A biosynthesis. This chain is UDP-3-O-acyl-N-acetylglucosamine deacetylase, found in Chlamydia trachomatis serovar A (strain ATCC VR-571B / DSM 19440 / HAR-13).